Consider the following 390-residue polypeptide: Glutamyl-tRNA reductase (390 aa).

Residues 46-49, S96, 101-103, and Q107 each bind substrate; these read TCNR and EAQ. C47 functions as the Nucleophile in the catalytic mechanism. Position 176-181 (176-181) interacts with NADP(+); sequence GAGEMA.

The protein belongs to the glutamyl-tRNA reductase family. As to quaternary structure, homodimer.

The enzyme catalyses (S)-4-amino-5-oxopentanoate + tRNA(Glu) + NADP(+) = L-glutamyl-tRNA(Glu) + NADPH + H(+). It functions in the pathway porphyrin-containing compound metabolism; protoporphyrin-IX biosynthesis; 5-aminolevulinate from L-glutamyl-tRNA(Glu): step 1/2. In terms of biological role, catalyzes the NADPH-dependent reduction of glutamyl-tRNA(Glu) to glutamate 1-semialdehyde (GSA). The protein is Glutamyl-tRNA reductase of Thermus thermophilus (strain ATCC 27634 / DSM 579 / HB8).